The primary structure comprises 260 residues: Ras-related protein Rab-26 (260 aa).

Residues 1-56 (MSRKKTPKSKGGSEPATSTLPAAAAATNGPRLAHPRTVRPGPEAPPNGPPQSIRPS) are disordered. GTP-binding residues include S76, G77, V78, G79, K80, T81, C82, S99, and T100. T81 is a Mg(2+) binding site. 2 consecutive short sequence motifs (switch) follow at residues 90–105 (GAFLAGTFISTVGIDF) and 123–140 (DTAGQERFRSVTHAYYRD). The Mg(2+) site is built by T100 and D123. GTP is bound by residues G126, N181, K182, D184, A212, and R213. 2 S-geranylgeranyl cysteine lipidation sites follow: C257 and C258.

Belongs to the small GTPase superfamily. Rab family. Interacts with ADRA2B. Interacts with RIMS1. The cofactor is Mg(2+). Detected in zymogenic cells in the stomach.

The protein resides in the cytoplasmic vesicle. It is found in the secretory vesicle membrane. It localises to the golgi apparatus membrane. The catalysed reaction is GTP + H2O = GDP + phosphate + H(+). Its activity is regulated as follows. Regulated by guanine nucleotide exchange factors (GEFs) which promote the exchange of bound GDP for free GTP. Regulated by GTPase activating proteins (GAPs) which increase the GTP hydrolysis activity. Inhibited by GDP dissociation inhibitors (GDIs). Functionally, the small GTPases Rab are key regulators of intracellular membrane trafficking, from the formation of transport vesicles to their fusion with membranes. Rabs cycle between an inactive GDP-bound form and an active GTP-bound form that is able to recruit to membranes different set of downstream effectors directly responsible for vesicle formation, movement, tethering and fusion. RAB26 mediates transport of ADRA2A and ADRA2B from the Golgi to the cell membrane. Plays a role in the maturation of zymogenic granules and in pepsinogen secretion in the stomach. Plays a role in the secretion of amylase from acinar granules in the parotid gland. The sequence is that of Ras-related protein Rab-26 from Mus musculus (Mouse).